Here is a 389-residue protein sequence, read N- to C-terminus: Gustatory receptor for bitter taste 22e (389 aa).

At 1 to 14 (MFRPSGSGYRQKWT) the chain is on the cytoplasmic side. Residues 15–35 (GLTLKGALYGSWILGVFPFAY) traverse the membrane as a helical segment. Residues 36–46 (DSWTRTLRRSK) lie on the Extracellular side of the membrane. Residues 47-67 (WLIAYGFVLNAAFILLVVTND) traverse the membrane as a helical segment. The Cytoplasmic segment spans residues 68–142 (TESETPLRME…SLEECISFDR (75 aa)). The chain crosses the membrane as a helical span at residues 143–163 (FVLYKGFSVVLELVSMLVLEL). Over 164 to 170 (GMSPNYS) the chain is Extracellular. Asn168 carries an N-linked (GlcNAc...) asparagine glycan. A helical transmembrane segment spans residues 171–191 (AQFFIGLGSLCLMLLAVLLGA). Over 192–254 (SHFHLAVVFV…QRLASIYDYQ (63 aa)) the chain is Cytoplasmic. The chain crosses the membrane as a helical span at residues 255 to 275 (MVMVMVSFLIANVLGIYFFII). Residues 276–287 (YSISLNKSLDFK) lie on the Extracellular side of the membrane. Asn281 carries an N-linked (GlcNAc...) asparagine glycan. Residues 288–308 (ILVFVQALVINMLDFWLNVEI) form a helical membrane-spanning segment. The Cytoplasmic portion of the chain corresponds to 309–366 (CELAERTGRQTSTILKLFNDIENIDEKLERSITDFALFCSHRRLRFHHCGLFYVNYEM). The chain crosses the membrane as a helical span at residues 367 to 387 (GFRMAITSFLYLLFLIQFDYW). Topologically, residues 388–389 (NL) are extracellular.

This sequence belongs to the insect chemoreceptor superfamily. Gustatory receptor (GR) family. Gr22e subfamily. As to expression, taste bristles on the labial palp, labral and cibarial sense organs, chemosensory bristles on the leg and anterior wing margin. In larvae, is expressed in neurons of the terminal external chemosensory organ and in the dorsal pharyngeal sense organ. Neurons expressing Gr22e also express Gr66a and correspond to taste neurons that mediate sensitivity to bitter compounds.

Its subcellular location is the cell membrane. Its function is as follows. Gustatory receptor which mediates acceptance or avoidance behavior, depending on its substrates. Seems to be involved in the sensing of bitter taste since it is expressed in neurons that mediate sensitivity to bitter compounds which are also avoidance-type taste neurons. This Drosophila melanogaster (Fruit fly) protein is Gustatory receptor for bitter taste 22e (Gr22e).